The chain runs to 241 residues: ATP synthase subunit a (241 aa).

The next 5 membrane-spanning stretches (helical) occupy residues G30–G50, F91–W111, I128–S148, L193–L213, and G214–G234.

The protein belongs to the ATPase A chain family. In terms of assembly, F-type ATPases have 2 components, CF(1) - the catalytic core - and CF(0) - the membrane proton channel. CF(1) has five subunits: alpha(3), beta(3), gamma(1), delta(1), epsilon(1). CF(0) has four main subunits: a, b, b' and c.

It localises to the cellular thylakoid membrane. Key component of the proton channel; it plays a direct role in the translocation of protons across the membrane. This Prochlorococcus marinus (strain MIT 9303) protein is ATP synthase subunit a.